A 258-amino-acid polypeptide reads, in one-letter code: 5'-nucleotidase SurE (258 aa).

A divalent metal cation-binding residues include Asp18, Asp19, Ser49, and Asn102.

Belongs to the SurE nucleotidase family. It depends on a divalent metal cation as a cofactor.

It localises to the cytoplasm. The catalysed reaction is a ribonucleoside 5'-phosphate + H2O = a ribonucleoside + phosphate. In terms of biological role, nucleotidase that shows phosphatase activity on nucleoside 5'-monophosphates. In Vibrio campbellii (strain ATCC BAA-1116), this protein is 5'-nucleotidase SurE.